A 180-amino-acid chain; its full sequence is Nucleoside-triphosphatase THEP1 (180 aa).

ATP is bound by residues 9–16 (GPAGVGKT) and 104–111 (LIVIDEIG).

The protein belongs to the THEP1 NTPase family.

It catalyses the reaction a ribonucleoside 5'-triphosphate + H2O = a ribonucleoside 5'-diphosphate + phosphate + H(+). Its function is as follows. Has nucleotide phosphatase activity towards ATP, GTP, CTP, TTP and UTP. May hydrolyze nucleoside diphosphates with lower efficiency. This chain is Nucleoside-triphosphatase THEP1, found in Thermococcus kodakarensis (strain ATCC BAA-918 / JCM 12380 / KOD1) (Pyrococcus kodakaraensis (strain KOD1)).